A 502-amino-acid polypeptide reads, in one-letter code: L-aspartate oxidase (502 aa).

Residues 12–15, lysine 34, 41–48, and aspartate 207 each bind FAD; these read NGLA and ASRHAQGG. Arginine 276 (proton donor/acceptor) is an active-site residue. Residues glutamate 362 and 378–379 each bind FAD; that span reads SL.

This sequence belongs to the FAD-dependent oxidoreductase 2 family. NadB subfamily. The cofactor is FAD.

It is found in the cytoplasm. It carries out the reaction L-aspartate + O2 = iminosuccinate + H2O2. It participates in cofactor biosynthesis; NAD(+) biosynthesis; iminoaspartate from L-aspartate (oxidase route): step 1/1. Catalyzes the oxidation of L-aspartate to iminoaspartate, the first step in the de novo biosynthesis of NAD(+). The chain is L-aspartate oxidase (nadB) from Neisseria meningitidis serogroup B (strain ATCC BAA-335 / MC58).